The primary structure comprises 488 residues: UDP-N-acetylmuramate--L-alanine ligase (488 aa).

Residue 129–135 (GSHGKTT) participates in ATP binding.

The protein belongs to the MurCDEF family.

The protein localises to the cytoplasm. The enzyme catalyses UDP-N-acetyl-alpha-D-muramate + L-alanine + ATP = UDP-N-acetyl-alpha-D-muramoyl-L-alanine + ADP + phosphate + H(+). It functions in the pathway cell wall biogenesis; peptidoglycan biosynthesis. Functionally, cell wall formation. The polypeptide is UDP-N-acetylmuramate--L-alanine ligase (Prochlorococcus marinus (strain MIT 9303)).